We begin with the raw amino-acid sequence, 195 residues long: MRVAEVVRNTSETQIRVKIDLDGTGRQKLATGVPFLDHMLDQIARHGLVDLDIEAHGDTHIDDHHTVEDVGITLGQAVAKAVGDKKGIRRYGHSYVPLDEALSRVVIDFSGRPGLEFHVPFTRARIGTFDVDLSIEFFRGFVNHAGVTLHIDNLRGVNAHHQLETVFKAFGRALRMAVELDERAAGQIPSTKGSL.

Belongs to the imidazoleglycerol-phosphate dehydratase family.

The protein localises to the cytoplasm. The enzyme catalyses D-erythro-1-(imidazol-4-yl)glycerol 3-phosphate = 3-(imidazol-4-yl)-2-oxopropyl phosphate + H2O. Its pathway is amino-acid biosynthesis; L-histidine biosynthesis; L-histidine from 5-phospho-alpha-D-ribose 1-diphosphate: step 6/9. The sequence is that of Imidazoleglycerol-phosphate dehydratase from Burkholderia thailandensis (strain ATCC 700388 / DSM 13276 / CCUG 48851 / CIP 106301 / E264).